Consider the following 369-residue polypeptide: Peridinin-chlorophyll a-binding protein 2, chloroplastic (369 aa).

A chloroplast-targeting transit peptide spans 1 to 56; the sequence is MVRSGKKAVVLATVAFCATSVVQKTCGFVPSPLRQRAAAAGAAASVATMFAPAAFA. A run of 2 repeats spans residues 57–219 and 220–369.

As to quaternary structure, homotrimer.

It is found in the plastid. It localises to the chloroplast. Its function is as follows. Water-soluble antenna for capture of solar energy in the blue-green range. Peridinin is an asymmetric carotenoid. The polypeptide is Peridinin-chlorophyll a-binding protein 2, chloroplastic (Amphidinium carterae (Dinoflagellate)).